The sequence spans 325 residues: Glutarate 2-hydroxylase (325 aa).

Residues His-160, Asp-162, and His-292 each contribute to the Fe cation site.

It belongs to the glutarate hydroxylase family. In terms of assembly, homotetramer. The cofactor is Fe(2+).

The catalysed reaction is glutarate + 2-oxoglutarate + O2 = (S)-2-hydroxyglutarate + succinate + CO2. The protein operates within amino-acid degradation. Its function is as follows. Acts as an alpha-ketoglutarate-dependent dioxygenase catalyzing hydroxylation of glutarate (GA) to L-2-hydroxyglutarate (L2HG). Functions in a L-lysine degradation pathway that proceeds via cadaverine, glutarate and L-2-hydroxyglutarate. The polypeptide is Glutarate 2-hydroxylase (Pseudomonas putida (strain GB-1)).